The chain runs to 196 residues: dCTP deaminase, dUMP-forming (196 aa).

DCTP is bound by residues 101–106 (KSSLGR), D119, 127–129 (TLE), Q148, Y162, and Q174. The Proton donor/acceptor role is filled by E129.

Belongs to the dCTP deaminase family. In terms of assembly, homotrimer.

The enzyme catalyses dCTP + 2 H2O = dUMP + NH4(+) + diphosphate. It participates in pyrimidine metabolism; dUMP biosynthesis; dUMP from dCTP: step 1/1. Its function is as follows. Bifunctional enzyme that catalyzes both the deamination of dCTP to dUTP and the hydrolysis of dUTP to dUMP without releasing the toxic dUTP intermediate. The chain is dCTP deaminase, dUMP-forming from Tropheryma whipplei (strain TW08/27) (Whipple's bacillus).